A 307-amino-acid chain; its full sequence is MTDSTYDVNRVRAYLQGLQMRIADALGAFDGTPLAADTWRRGPGERLRGGGCTRILEAGGFFERAGIGFSDVAGDALPPSANASRPQLAGRGFEALGVSLVLHPRNPYCPTVHMNVRMLIATKPGEAPVFWFGGGMDLTPIYGFEEDARHFHRTCRAALEPFGAELYPRFKKWCDDYFFLKHRNEARGIGGIFFDDFSELGFERSFEMLQSVGDAFLPSYLPIVERRRDTPYGERERAFQAYRRGRYVEFNLVFDRGTLFGLQSGGRTESILLSMPPTAGWRYDWHPDPGTPEARLQSEFLVPRDWA.

Ser-99 serves as a coordination point for substrate. Positions 103 and 113 each coordinate a divalent metal cation. His-113 (proton donor) is an active-site residue. 115-117 contacts substrate; the sequence is NVR. Residues His-152 and His-182 each coordinate a divalent metal cation. The interval 247–282 is important for dimerization; it reads YVEFNLVFDRGTLFGLQSGGRTESILLSMPPTAGWR. Residue 265 to 267 coordinates substrate; that stretch reads GGR.

This sequence belongs to the aerobic coproporphyrinogen-III oxidase family. As to quaternary structure, homodimer. A divalent metal cation serves as cofactor.

The protein localises to the cytoplasm. The catalysed reaction is coproporphyrinogen III + O2 + 2 H(+) = protoporphyrinogen IX + 2 CO2 + 2 H2O. The protein operates within porphyrin-containing compound metabolism; protoporphyrin-IX biosynthesis; protoporphyrinogen-IX from coproporphyrinogen-III (O2 route): step 1/1. Its function is as follows. Involved in the heme biosynthesis. Catalyzes the aerobic oxidative decarboxylation of propionate groups of rings A and B of coproporphyrinogen-III to yield the vinyl groups in protoporphyrinogen-IX. The chain is Oxygen-dependent coproporphyrinogen-III oxidase from Burkholderia mallei (strain SAVP1).